The primary structure comprises 305 residues: tRNA dimethylallyltransferase (305 aa).

14 to 21 lines the ATP pocket; sequence GPTASGKS. Position 16 to 21 (16 to 21) interacts with substrate; the sequence is TASGKS. Residues 39–42 are interaction with substrate tRNA; that stretch reads DSMQ.

Belongs to the IPP transferase family. Monomer. It depends on Mg(2+) as a cofactor.

The enzyme catalyses adenosine(37) in tRNA + dimethylallyl diphosphate = N(6)-dimethylallyladenosine(37) in tRNA + diphosphate. Its function is as follows. Catalyzes the transfer of a dimethylallyl group onto the adenine at position 37 in tRNAs that read codons beginning with uridine, leading to the formation of N6-(dimethylallyl)adenosine (i(6)A). The protein is tRNA dimethylallyltransferase of Bradyrhizobium sp. (strain BTAi1 / ATCC BAA-1182).